We begin with the raw amino-acid sequence, 378 residues long: MDIPPLAGRTVAMSLGALPVSYVLNQVSAFSQPLCVVLTSALVLGLLFMAVYSLSHGEITYDPLYAVFVVFSFTSVVDLVIALQEDGYLMGLMDFYAKEGEPYLRTAHGIFICYWDGTVHYLLYLTMAGAIRKRKRYRNLGLYWLGSFAMSLLVFLPGNILGKYSSEIRPTFFLAILYMLVPCWAGMRIFNQSPAPSSCTCDVVQEEQKKSLLQRPADLTLIVYLILAAFFTVFRGLVVLDCPADACFIYIYQYEPYLRDPVAYPKLQMLMYLFYALPFYCLAAYALTFPGCSWLPDWALVFAGAIGQAQFSHMGASMHLRTPFTYRVPEDTWATFLLSNLLFALGPHLLALRCLWRPAFFLRAAPPSSPQDQGKKQQ.

The next 9 helical transmembrane spans lie at 34–54 (LCVV…VYSL), 63–83 (PLYA…VIAL), 110–130 (IFIC…MAGA), 140–160 (LGLY…PGNI), 170–190 (PTFF…MRIF), 219–239 (LTLI…GLVV), 269–289 (MLMY…ALTF), 291–311 (GCSW…QAQF), and 332–352 (TWAT…LLAL). EXPERA domains follow at residues 61-186 (YDPL…CWAG) and 217-351 (ADLT…HLLA).

Belongs to the TM6SF family.

Its subcellular location is the endoplasmic reticulum membrane. The protein resides in the endoplasmic reticulum-Golgi intermediate compartment membrane. Regulator of liver fat metabolism influencing triglyceride secretion and hepatic lipid droplet content. May function as sterol isomerase. The chain is Transmembrane 6 superfamily member 2 (Tm6sf2) from Rattus norvegicus (Rat).